The chain runs to 158 residues: Putative cTAGE family member 3 (158 aa).

A coiled-coil region spans residues 26–96 (QLQESQKQLL…AAVLEEDITD (71 aa)).

Belongs to the cTAGE family. Expressed in normal tissues including colon, mammary gland, ovary, placenta, stomach and testis, as well as several fetal tissues.

In terms of biological role, tumor-associated antigen. The sequence is that of Putative cTAGE family member 3 (CTAGE3P) from Homo sapiens (Human).